The following is a 206-amino-acid chain: Small ribosomal subunit protein uS4 (206 aa).

Residues 96 to 156 (CRLDNVVYRM…EKSKNQLRIA (61 aa)) form the S4 RNA-binding domain.

It belongs to the universal ribosomal protein uS4 family. Part of the 30S ribosomal subunit. Contacts protein S5. The interaction surface between S4 and S5 is involved in control of translational fidelity.

Its function is as follows. One of the primary rRNA binding proteins, it binds directly to 16S rRNA where it nucleates assembly of the body of the 30S subunit. Functionally, with S5 and S12 plays an important role in translational accuracy. The protein is Small ribosomal subunit protein uS4 of Pseudomonas aeruginosa (strain LESB58).